The following is a 378-amino-acid chain: uncharacterized protein (378 aa).

This is an uncharacterized protein from Orgyia pseudotsugata multicapsid polyhedrosis virus (OpMNPV).